The primary structure comprises 374 residues: 4-galactosyl-N-acetylglucosaminide 3-alpha-L-fucosyltransferase FUT5 (374 aa).

Topologically, residues Met1–Arg15 are cytoplasmic. A helical; Signal-anchor for type II membrane protein transmembrane segment spans residues Cys16–Leu34. Residues Arg35–Asn374 are Lumenal-facing. N-linked (GlcNAc...) asparagine glycosylation is found at Asn60, Asn105, Asn167, and Asn198.

Belongs to the glycosyltransferase 10 family.

Its subcellular location is the golgi apparatus. It is found in the golgi stack membrane. It catalyses the reaction a beta-D-galactosyl-(1-&gt;3)-N-acetyl-beta-D-glucosaminyl derivative + GDP-beta-L-fucose = a beta-D-galactosyl-(1-&gt;3)-[alpha-L-fucosyl-(1-&gt;4)]-N-acetyl-beta-D-glucosaminyl derivative + GDP + H(+). It carries out the reaction an N-acetyl-alpha-neuraminyl-(2-&gt;3)-beta-D-galactosyl-(1-&gt;4)-N-acetyl-beta-D-glucosaminyl derivative + GDP-beta-L-fucose = an alpha-Neu5Ac-(2-&gt;3)-beta-D-Gal-(1-&gt;4)-[alpha-L-Fuc-(1-&gt;3)]-beta-D-GlcNAc derivative + GDP + H(+). The enzyme catalyses an alpha-Neu5Ac-(2-&gt;3)-beta-D-Gal-(1-&gt;4)-beta-D-GlcNAc-(1-&gt;3)-beta-D-Gal-(1-&gt;4)-[alpha-L-Fuc-(1-&gt;3)]-beta-D-GlcNAc derivative + GDP-beta-L-fucose = an alpha-Neu5Ac-(2-&gt;3)-beta-D-Gal-(1-&gt;4)-[alpha-L-Fuc-(1-&gt;3)]-beta-D-GlcNAc-(1-&gt;3)-beta-D-Gal-(1-&gt;4)-[alpha-L-Fuc-(1-&gt;3)]-beta-D-GlcNAc derivative + GDP + H(+). The catalysed reaction is a beta-D-galactosyl-(1-&gt;4)-N-acetyl-beta-D-glucosaminyl derivative + GDP-beta-L-fucose = a beta-D-galactosyl-(1-&gt;4)-[alpha-L-fucosyl-(1-&gt;3)]-N-acetyl-beta-D-glucosaminyl derivative + GDP + H(+). It catalyses the reaction a neolactoside nLc4Cer + GDP-beta-L-fucose = a neolactoside III(3)-alpha-Fuc-nLc4Cer + GDP + H(+). It carries out the reaction a neolactoside nLc6Cer + GDP-beta-L-fucose = beta-D-galactosyl-(1-&gt;4)-N-acetyl-beta-D-glucosaminyl-(1-&gt;3)-beta-D-galactosyl-(1-&gt;4)-[alpha-L-fucosyl-(1-&gt;3)]-N-acetyl-beta-D-glucosaminyl-(1-&gt;3)-beta-D-galactosyl-(1-&gt;4)-beta-D-glucosyl-(1&lt;-&gt;1')-ceramide + GDP + H(+). The enzyme catalyses a neolactoside nLc6Cer(d18:1(4E)) + GDP-beta-L-fucose = a neolactoside III(3)-alpha-Fuc-nLc6Cer(d18:1(4E)) + GDP + H(+). The catalysed reaction is a neolactoside nLc4Cer(d18:1(4E)) + GDP-beta-L-fucose = a neolactoside III(3)-alpha-Fuc-nLc4Cer(d18:1(4E)) + GDP + H(+). It catalyses the reaction a neolactoside VI(3)-alpha-NeuNAc-nLc6Cer + GDP-beta-L-fucose = a neolactoside VI(3)-alpha-NeuAc,III(3)-alphaFuc-nLc6Cer + GDP + H(+). It carries out the reaction beta-D-galactosyl-(1-&gt;4)-N-acetyl-D-glucosamine + GDP-beta-L-fucose = beta-D-galactosyl-(1-&gt;4)-[alpha-L-fucosyl-(1-&gt;3)]-N-acetyl-D-glucosamine + GDP + H(+). The enzyme catalyses N-acetyl-alpha-neuraminosyl-(2-&gt;3)-beta-D-galactosyl-(1-&gt;4)-N-acetyl-beta-D-glucosamine + GDP-beta-L-fucose = N-acetyl-alpha-neuraminosyl-(2-&gt;3)-beta-D-galactosyl-(1-&gt;4)-[alpha-L-fucosyl-(1-&gt;3)]-N-acetyl-beta-D-glucosamine + GDP + H(+). The catalysed reaction is alpha-L-Fuc-(1-&gt;2)-beta-D-Gal-(1-&gt;4)-D-GlcNAc + GDP-beta-L-fucose = alpha-L-Fuc-(1-&gt;2)-beta-D-Gal-(1-&gt;4)-[alpha-L-Fuc-(1-&gt;3)]-D-GlcNAc + GDP + H(+). It catalyses the reaction an alpha-Neu5Ac-(2-&gt;3)-beta-D-Gal-(1-&gt;3)-D-GlcNAc derivative + GDP-beta-L-fucose = an alpha-Neu5Ac-(2-&gt;3)-beta-D-Gal-(1-&gt;3)-[alpha-L-Fuc-(1-&gt;4)]-beta-D-GlcNAc derivative + GDP + H(+). It participates in protein modification; protein glycosylation. In terms of biological role, catalyzes preferentially the transfer of L-fucose, from a guanosine diphosphate-beta-L-fucose, to the N-acetyl-beta-D-glucosamine (GlcNAc) of an N-acetyllactosamine unit (type 2 chain) of an oligosaccharide, or a glycoprotein- and a glycolipid-linked N-acetyllactosamine unit via an alpha (1,3) linkage and participates in the surface expression of VIM-2, Lewis X/SSEA-1 and sialyl Lewis X antigens. Preferentially transfers fucose to the GlcNAc of an internal N-acetyllactosamine unit of a poly-N-acetyllactosamine chain acceptor substrate. Also catalyzes to a lesser extend the transfer of L-fucose to the GlcNAc of a type 1 (beta-D-galactosyl-(1-&gt;3)-N-acetyl-beta-D-glucosaminyl) or H-type 1 (alpha-L-Fuc-(1-&gt;2)-beta-D-Gal-(1-&gt;3)-D-GlcNAc) chain oligosaccharide via an alpha (1,4) linkage. Preferentially catalyzes sialylated type 2 oligosaccharide acceptors over neutral type 2 or H type 2 (alpha-L-Fuc-(1-&gt;2)-beta-D-Gal-(1-&gt;4)-D-GlcNAc) oligosaccharide acceptors. Lactose-based structures are also acceptor substrates. The protein is 4-galactosyl-N-acetylglucosaminide 3-alpha-L-fucosyltransferase FUT5 of Hylobates lar (Lar gibbon).